The primary structure comprises 271 residues: MAGAEDGPGQQPELEDDEAASCRRWGAQHAGARELAALYSPGKRFQEWCCVVLCFSLIAHNMAHLLLLARWEHTPLVMLGMVAGALLADFLSGLVHWGADTWGSVELPIVGKAFIRPFREHHIDPTAITRHDFIETNGDNCLLTLLPLLNMAYKFRTQSPEVLEQLYPWECFVFCLIIFGTFTNQIHKWSHTYFGLPCWVVFLQDWHVILPRKHHRIHHVSPHETYFCITTGWLNYPLERMGFWRRLEDIIQALTGEKPRADDMKWAQKIK.

3 consecutive transmembrane segments (helical) span residues 48–68 (WCCVVLCFSLIAHNMAHLLLL), 75–95 (PLVMLGMVAGALLADFLSGLV), and 162–182 (VLEQLYPWECFVFCLIIFGTF). Residues 187-191 (HKWSH) carry the Histidine box-1 motif. The Histidine box-2 signature appears at 214 to 218 (HHRIH).

Belongs to the fatty acid desaturase CarF family.

The protein localises to the endoplasmic reticulum membrane. The catalysed reaction is a 1-(1,2-saturated alkyl)-2-acyl-sn-glycero-3-phosphoethanolamine + 2 Fe(II)-[cytochrome b5] + O2 + 2 H(+) = a 1-O-(1Z-alkenyl)-2-acyl-sn-glycero-3-phosphoethanolamine + 2 Fe(III)-[cytochrome b5] + 2 H2O. It catalyses the reaction a 1-O-hexadecyl-2-acyl-sn-glycero-3-phosphoethanolamine + 2 Fe(II)-[cytochrome b5] + O2 + 2 H(+) = a 1-O-(1Z-hexadecenyl)-2-acyl-sn-glycero-3-phosphoethanolamine + 2 Fe(III)-[cytochrome b5] + 2 H2O. It carries out the reaction a 1-O-octadecyl-2-acyl-sn-glycero-3-phosphoethanolamine + 2 Fe(II)-[cytochrome b5] + O2 + 2 H(+) = a 1-O-(1Z-octadecenyl)-2-acyl-sn-glycero-3-phosphoethanolamine + 2 Fe(III)-[cytochrome b5] + 2 H2O. The enzyme catalyses a 1-O-(9Z-octadecenyl)-2-acyl-sn-glycero-3-phosphoethanolamine + 2 Fe(II)-[cytochrome b5] + O2 + 2 H(+) = a 1-O-(1Z,9Z-octadecadienyl)-2-acyl-sn-glycero-3-phosphoethanolamine + 2 Fe(III)-[cytochrome b5] + 2 H2O. It functions in the pathway lipid metabolism; fatty acid metabolism. In terms of biological role, plasmanylethanolamine desaturase involved in plasmalogen biogenesis in the endoplasmic reticulum membrane. Plasmalogens are glycerophospholipids with a hydrocarbon chain linked by a vinyl ether bond at the glycerol sn-1 position, and are involved in antioxidative and signaling mechanisms. The protein is Plasmanylethanolamine desaturase 1 of Bos taurus (Bovine).